A 181-amino-acid chain; its full sequence is Protein Syd (181 aa).

This sequence belongs to the Syd family.

The protein localises to the cell inner membrane. Interacts with the SecY protein in vivo. May bind preferentially to an uncomplexed state of SecY, thus functioning either as a chelating agent for excess SecY in the cell or as a regulatory factor that negatively controls the translocase function. The protein is Protein Syd of Enterobacter sp. (strain 638).